A 702-amino-acid polypeptide reads, in one-letter code: Lipase maturation factor 2 (702 aa).

8 helical membrane-spanning segments follow: residues 10–30 (LFLQGVAAVYLFAFASLYTQI), 75–95 (AQGLDLLTLLGTVLALGALLL), 164–184 (DLPFWLVRWLLFRLMFASGVV), 226–246 (LSVVATFLIEIAVPPLFFAPI), 259–279 (LLQVLIIITGNYNFFNLLTLV), 316–336 (LLLELTVYGLLAYGTVYYFGL), 363–383 (VTLPTVWLGTASLAWELLVVL), and 398–418 (AGIQLSVLGTATVALFLISLV). A glycan (N-linked (GlcNAc...) asparagine) is linked at Asn488. Residues 636-656 (ILLWGLFGAVVAIRVVQTLLA) traverse the membrane as a helical segment. Positions 660 to 702 (LQSSKQTREEKRKQTSKKDSRAASEQAAANSNSRDSWAPRRKK) are disordered. Basic and acidic residues predominate over residues 665–681 (QTREEKRKQTSKKDSRA). Residues 682-693 (ASEQAAANSNSR) are compositionally biased toward low complexity.

This sequence belongs to the lipase maturation factor family.

It localises to the endoplasmic reticulum membrane. Involved in the maturation of specific proteins in the endoplasmic reticulum. May be required for maturation and transport of active lipoprotein lipase (LPL) through the secretory pathway. This Mus musculus (Mouse) protein is Lipase maturation factor 2 (Lmf2).